A 188-amino-acid polypeptide reads, in one-letter code: MLVHPEAMSVGALADKIRKIENWPQKGILFHDITPVLQSAEYFRLLVDLLVYRYMDQKIDIVAGLDARGFIIGAALAYQLNVGFVPIRKKGKLPFETVSQSYALEYGEAAVEIHTDAVKLGSRVLLVDDLIATGGTMLAGLELIRKLGGEIVEAAAILEFTDLQGGKNIRASGAPLFTLLQNEGCMKG.

Belongs to the purine/pyrimidine phosphoribosyltransferase family. As to quaternary structure, homodimer.

It localises to the cytoplasm. The catalysed reaction is AMP + diphosphate = 5-phospho-alpha-D-ribose 1-diphosphate + adenine. It functions in the pathway purine metabolism; AMP biosynthesis via salvage pathway; AMP from adenine: step 1/1. Functionally, catalyzes a salvage reaction resulting in the formation of AMP, that is energically less costly than de novo synthesis. The sequence is that of Adenine phosphoribosyltransferase from Neisseria meningitidis serogroup B (strain ATCC BAA-335 / MC58).